The following is a 677-amino-acid chain: Methionine--tRNA ligase (677 aa).

A 'HIGH' region motif is present at residues 15 to 25 (PYANGSIHLGH). Cysteine 146, cysteine 149, cysteine 159, and cysteine 162 together coordinate Zn(2+). The short motif at 333–337 (KMSKS) is the 'KMSKS' region element. Lysine 336 serves as a coordination point for ATP. The region spanning 575–677 (DFAKVDLRVA…EGAKPGQQVK (103 aa)) is the tRNA-binding domain.

This sequence belongs to the class-I aminoacyl-tRNA synthetase family. MetG type 1 subfamily. As to quaternary structure, homodimer. It depends on Zn(2+) as a cofactor.

The protein resides in the cytoplasm. The enzyme catalyses tRNA(Met) + L-methionine + ATP = L-methionyl-tRNA(Met) + AMP + diphosphate. In terms of biological role, is required not only for elongation of protein synthesis but also for the initiation of all mRNA translation through initiator tRNA(fMet) aminoacylation. This Enterobacter sp. (strain 638) protein is Methionine--tRNA ligase.